Reading from the N-terminus, the 260-residue chain is MSILFYVMFLPYLCGIHATNMDKRNLPENSMNSLFIKLIQADLLKNKISKQTVDTKENHQSTIPKPQILLDLDGDDNMKQDFQPVISLEAELVKQQKQRRYKSPRVLLSDSLPLEPPPLYLMDDYIGHSTVVNNRTSRRKRFAEHKGHRGEYSVCDSESLWVTDKMNAIDIRGHQVTVLGEIKTGNSPVKQYFYETRCKEARPVKNGCRGIDDKHWNSQCKTSQTYVRALTSENNKMVGWRWIRIDTSCVCALSRKIGRS.

The signal sequence occupies residues 1-18 (MSILFYVMFLPYLCGIHA). Positions 19–141 (TNMDKRNLPE…VNNRTSRRKR (123 aa)) are excised as a propeptide. N-linked (GlcNAc...) asparagine glycosylation is present at N134. Disulfide bonds link C155-C220, C198-C249, and C208-C251.

This sequence belongs to the NGF-beta family.

Its subcellular location is the secreted. Its function is as follows. Seems to promote the survival of visceral and proprioceptive sensory neurons. This chain is Neurotrophin-3 (ntf3), found in Xenopus laevis (African clawed frog).